The chain runs to 363 residues: Serpentine receptor class T-55 (363 aa).

A signal peptide spans 1 to 18 (MKLRHFLIFLMLIPISSS). Transmembrane regions (helical) follow at residues 70–90 (IYYISSGLFFQLIGWPVIWVF), 107–127 (VFIGLIEITEIWGNSVFPGFV), 143–163 (IVGKMTMVQWVLGSSSAAFLG), 187–207 (WLTVLFFYACYGSIFFDTVLF), 231–251 (FLYFHNIIVATTLILVYACLC), 278–298 (ICISLTYAIPAISFVTMFVLP), and 303–323 (FFHVSDITYQLSGGLPFIMYI).

The protein belongs to the nematode receptor-like protein srt family.

It is found in the membrane. The protein is Serpentine receptor class T-55 (srt-55) of Caenorhabditis elegans.